The primary structure comprises 114 residues: Superoxide dismutase [Cu-Zn] (114 aa).

Residues H37, H39, and H54 each coordinate Cu cation. The tract at residues 49–73 (MSSGPHYNPRNKEHGAPTDENRHLG) is disordered. Positions 54, 62, 71, and 74 each coordinate Zn(2+). Over residues 58 to 73 (RNKEHGAPTDENRHLG) the composition is skewed to basic and acidic residues. A Cu cation-binding site is contributed by H111.

The protein belongs to the Cu-Zn superoxide dismutase family. Homodimer. Cu cation serves as cofactor. It depends on Zn(2+) as a cofactor.

The protein resides in the cytoplasm. The enzyme catalyses 2 superoxide + 2 H(+) = H2O2 + O2. In terms of biological role, destroys radicals which are normally produced within the cells and which are toxic to biological systems. This chain is Superoxide dismutase [Cu-Zn], found in Drosophila madeirensis (Fruit fly).